A 490-amino-acid polypeptide reads, in one-letter code: Betaine aldehyde dehydrogenase (490 aa).

K(+) contacts are provided by Ile-27 and Asp-93. 150 to 152 (GAW) lines the NAD(+) pocket. Lys-162 (charge relay system) is an active-site residue. 176-179 (KPSE) provides a ligand contact to NAD(+). Val-180 provides a ligand contact to K(+). 230-233 (GTDT) serves as a coordination point for NAD(+). Leu-246 serves as a coordination point for K(+). Glu-252 functions as the Proton acceptor in the catalytic mechanism. Residues Gly-254, Cys-286, and Glu-387 each coordinate NAD(+). Cys-286 functions as the Nucleophile in the catalytic mechanism. Cys-286 is subject to Cysteine sulfenic acid (-SOH). K(+) contacts are provided by Lys-457 and Gly-460. Glu-464 (charge relay system) is an active-site residue.

The protein belongs to the aldehyde dehydrogenase family. In terms of assembly, dimer of dimers. The cofactor is K(+).

The enzyme catalyses betaine aldehyde + NAD(+) + H2O = glycine betaine + NADH + 2 H(+). Its pathway is amine and polyamine biosynthesis; betaine biosynthesis via choline pathway; betaine from betaine aldehyde: step 1/1. In terms of biological role, involved in the biosynthesis of the osmoprotectant glycine betaine. Catalyzes the irreversible oxidation of betaine aldehyde to the corresponding acid. In Pseudomonas fluorescens (strain SBW25), this protein is Betaine aldehyde dehydrogenase.